A 260-amino-acid chain; its full sequence is Archaerhodopsin-1 (260 aa).

Residues 1 to 6 (MDPIAL) constitute a propeptide that is removed on maturation. At 7–20 (TAAVGADLLGDGRP) the chain is on the extracellular side. A helical transmembrane segment spans residues 21 to 42 (ETLWLGIGTLLMLIGTFYFIVK). At 43–51 (GWGVTDKEA) the chain is on the cytoplasmic side. Residues 52–73 (REYYSITILVPGIASAAYLSMF) traverse the membrane as a helical segment. At 74 to 91 (FGIGLTEVQVGSEMLDIY) the chain is on the extracellular side. The chain crosses the membrane as a helical span at residues 92–113 (YARYADWLFTTPLLLLDLALLA). Over 114–116 (KVD) the chain is Cytoplasmic. The helical transmembrane segment at 117-139 (RVSIGTLVGVDALMIVTGLVGAL) threads the bilayer. The Extracellular segment spans residues 140 to 143 (SHTP). Residues 144-172 (LARYTWWLFSTICMIVVLYFLATSLRAAA) traverse the membrane as a helical segment. Residues 173–176 (KERG) are Cytoplasmic-facing. Residues 177–204 (PEVASTFNTLTALVLVLWTAYPILWIIG) traverse the membrane as a helical segment. Over 205 to 212 (TEGAGVVG) the chain is Extracellular. Residues 213–245 (LGIETLLFMVLDVTAKVGFGFILLRSRAILGDT) traverse the membrane as a helical segment. Lysine 228 carries the N6-(retinylidene)lysine modification. At 246-260 (EAPEPSAGAEASAAD) the chain is on the cytoplasmic side.

This sequence belongs to the archaeal/bacterial/fungal opsin family.

It is found in the cell membrane. Its function is as follows. Light-driven proton pump. It may interact with bacterioruberin in the claret membrane. This chain is Archaerhodopsin-1, found in Halorubrum ezzemoulense (Halorubrum chaoviator).